The primary structure comprises 244 residues: Lipoprotein-releasing system ATP-binding protein LolD (244 aa).

The ABC transporter domain occupies 19-244 (IRAEALAKTY…KLRELAPSAV (226 aa)). 55 to 62 (GASGAGKS) provides a ligand contact to ATP.

This sequence belongs to the ABC transporter superfamily. Lipoprotein translocase (TC 3.A.1.125) family. In terms of assembly, the complex is composed of two ATP-binding proteins (LolD) and two transmembrane proteins (LolC and LolE).

It is found in the cell inner membrane. In terms of biological role, part of the ABC transporter complex LolCDE involved in the translocation of mature outer membrane-directed lipoproteins, from the inner membrane to the periplasmic chaperone, LolA. Responsible for the formation of the LolA-lipoprotein complex in an ATP-dependent manner. The sequence is that of Lipoprotein-releasing system ATP-binding protein LolD from Xanthomonas euvesicatoria pv. vesicatoria (strain 85-10) (Xanthomonas campestris pv. vesicatoria).